The chain runs to 234 residues: Large ribosomal subunit protein uL1 (234 aa).

It belongs to the universal ribosomal protein uL1 family. As to quaternary structure, part of the 50S ribosomal subunit.

Binds directly to 23S rRNA. The L1 stalk is quite mobile in the ribosome, and is involved in E site tRNA release. Its function is as follows. Protein L1 is also a translational repressor protein, it controls the translation of the L11 operon by binding to its mRNA. In terms of biological role, peptides originating from the N-terminal end of L1 have antibacterial activity against bacteria such as E.coli and B.megaterium and modest antifungal activities. Has no effect on H.pylori itself. Peptides are not hemolytic against mammalian cells. These peptides may be released in the stomach during altruistic lysis to kill other fast growing bacteria. The protein is Large ribosomal subunit protein uL1 of Helicobacter pylori (strain ATCC 700392 / 26695) (Campylobacter pylori).